The primary structure comprises 992 residues: Ribosome quality control complex subunit NEMF homolog (992 aa).

The span at 214–231 shows a compositional bias: basic and acidic residues; that stretch reads KETTEETPEAEDKPEKGG. Residues 214-245 are disordered; it reads KETTEETPEAEDKPEKGGKKQRKKQQNTKLEQ. Coiled coils occupy residues 331 to 370 and 481 to 514; these read STQE…LTKV and SAAQ…VRTI. Disordered regions lie at residues 688–715 and 771–895; these read EVEH…NTEI and GPSR…GDVD. Polar residues predominate over residues 702–715; the sequence is SNINLSEPSSNTEI. A coiled-coil region spans residues 774–839; that stretch reads RKKQVSAKKT…QDDEEREIRM (66 aa). Over residues 782–796 the composition is skewed to basic and acidic residues; it reads KTKEDKARAKQEAAK. The segment covering 814 to 825 has biased composition (basic residues); that stretch reads RGQKGKLKKMKQ. A compositionally biased stretch (basic and acidic residues) spans 845–874; that stretch reads SGKEKPQASADKVVEKSESTKEYVKPEKSA.

It belongs to the NEMF family. As to quaternary structure, component of the ribosome quality control complex (RQC), composed of at least the E3 ubiquitin ligase l(3)76BDr/LTN1 and Clbn/NEMF associated with the 60S ribosomal subunit. The complex probably also contains TCF25 as well as TER94/VCP and its ubiquitin-binding cofactors. Interacts (via its C-terminus) with pros (via its homeobox). Interacts (via its N-terminus) with emb. In terms of tissue distribution, expressed in enterocytes (at protein level).

It is found in the nucleus. Its subcellular location is the cytoplasm. The protein resides in the mitochondrion outer membrane. In terms of biological role, key component of the ribosome quality control complex (RQC), a ribosome-associated complex that mediates the extraction of incompletely synthesized nascent chains from stalled ribosomes as well as their ubiquitin-mediated proteasomal degradation. Thereby, frees 60S subunit ribosomes from the stalled translation complex and prevents the accumulation of nascent polypeptide chains that are potentially toxic for the cell. Within the RQC complex, Clbn/NEMF specifically binds stalled 60S ribosomal subunits by recognizing an exposed, nascent chain-conjugated tRNA moiety. Following binding to stalled 60S ribosomal subunits, Clbn/NEMF mediates CAT tailing by recruiting alanine-charged tRNA to the A-site and directing the elongation of stalled nascent chains independently of mRNA or 40S subunits, leading to non-templated C-terminal alanine extensions (CAT tails). On mitochondrial surface, plays a role in mitochondrial-stress induced translational termination impairment and protein carboxyl terminal extension (MISTERMINATE). Plays a role in regulating nuclear transport possibly through directly binding to both emb and cargo proteins. Plays a role in the regulation of G1-to-S cell cycle transition. Regulates S phase checkpoint by antagonizing E2F1 activity. Together with hid and tefu/ATM, plays a role in DNA damage-induced apoptosis through both p53-dependent and -independent activity. Plays an essential role in the regulation of mitochondrial structure and redox state in enterocytes which is essential for the control of intestinal stem cells proliferation and intestinal homeostasis. The protein is Ribosome quality control complex subunit NEMF homolog of Drosophila melanogaster (Fruit fly).